The primary structure comprises 181 residues: MLQENFVSCSKEREVQLAVLSEFIHIPTFIYTALNLVILYFILKRLLFKPVWEFMENRKNSIAESMEKAEKGKAEALELKNKYESELNEAYAKAQKILKEAEEKAKQEYERIIRDAKNEAEALKLKAKEEIEREKNEALKEIRNEVVSLALEAASKVLEANMDTEENRKLVNRFIDEQGVA.

A helical membrane pass occupies residues 23 to 43 (FIHIPTFIYTALNLVILYFIL).

Belongs to the ATPase B chain family. F-type ATPases have 2 components, F(1) - the catalytic core - and F(0) - the membrane proton channel. F(1) has five subunits: alpha(3), beta(3), gamma(1), delta(1), epsilon(1). F(0) has three main subunits: a(1), b(2) and c(10-14). The alpha and beta chains form an alternating ring which encloses part of the gamma chain. F(1) is attached to F(0) by a central stalk formed by the gamma and epsilon chains, while a peripheral stalk is formed by the delta and b chains.

The protein resides in the cell membrane. F(1)F(0) ATP synthase produces ATP from ADP in the presence of a proton or sodium gradient. F-type ATPases consist of two structural domains, F(1) containing the extramembraneous catalytic core and F(0) containing the membrane proton channel, linked together by a central stalk and a peripheral stalk. During catalysis, ATP synthesis in the catalytic domain of F(1) is coupled via a rotary mechanism of the central stalk subunits to proton translocation. Functionally, component of the F(0) channel, it forms part of the peripheral stalk, linking F(1) to F(0). The protein is ATP synthase subunit b of Acetivibrio thermocellus (strain ATCC 27405 / DSM 1237 / JCM 9322 / NBRC 103400 / NCIMB 10682 / NRRL B-4536 / VPI 7372) (Clostridium thermocellum).